Reading from the N-terminus, the 380-residue chain is Kappa-type opioid receptor (380 aa).

At 1–57 (MGRRRQGPAQPASELPARNACLLPNGSAWLPGWAEPDGNGSAGPQDEQLEPAHISPA) the chain is on the extracellular side. N-linked (GlcNAc...) asparagine glycans are attached at residues Asn25 and Asn39. Residues 58–85 (IPVIITAVYSVVFVVGLVGNSLVMFVII) form a helical membrane-spanning segment. Topologically, residues 86–95 (RYTKMKTATN) are cytoplasmic. Residues 96-119 (IYIFNLALADALVTTTMPFQSTVY) form a helical membrane-spanning segment. Residues 120–132 (LMNSWPFGDVLCK) are Extracellular-facing. Cys131 and Cys210 are disulfide-bonded. The chain crosses the membrane as a helical span at residues 133–154 (IVISIDYYNMFTSIFTLTMMSV). At 155-173 (DRYIAVCHPVKALDFRTPL) the chain is on the cytoplasmic side. Residues 174–196 (KAKIINICIWLLSSSVGISAIIL) form a helical membrane-spanning segment. Residues 197-222 (GGTKVREDVDIIECSLQFPDDDYSWW) lie on the Extracellular side of the membrane. Residues 223–247 (DLFMKICVFVFAFVIPVLIIIVCYT) form a helical membrane-spanning segment. The Cytoplasmic segment spans residues 248 to 274 (LMILRLKSVRLLSGSREKDRNLRRITR). Residues 275 to 296 (LVLVVVAVFIICWTPIHIFILV) traverse the membrane as a helical segment. The Extracellular portion of the chain corresponds to 297 to 311 (EALGSTSHSTAALSS). A helical transmembrane segment spans residues 312–333 (YYFCIALGYTNSSLNPILYAFL). The Cytoplasmic segment spans residues 334–380 (DENFKRCFRDFCFPIKMRMERQSTSRVRNTVQDPAYMRNVDGVNKPV). A lipid anchor (S-palmitoyl cysteine) is attached at Cys345.

It belongs to the G-protein coupled receptor 1 family. As to quaternary structure, interacts with NHERF1. Interacts with GABARAPL1.

It localises to the cell membrane. G-protein coupled opioid receptor that functions as a receptor for endogenous alpha-neoendorphins and dynorphins, but has low affinity for beta-endorphins. Also functions as a receptor for various synthetic opioids and for the psychoactive diterpene salvinorin A. Ligand binding causes a conformation change that triggers signaling via guanine nucleotide-binding proteins (G proteins) and modulates the activity of down-stream effectors, such as adenylate cyclase. Signaling leads to the inhibition of adenylate cyclase activity. Inhibits neurotransmitter release by reducing calcium ion currents and increasing potassium ion conductance. Plays a role in the perception of pain. Plays a role in mediating reduced physical activity upon treatment with synthetic opioids. Plays a role in the regulation of salivation in response to synthetic opioids. May play a role in arousal and regulation of autonomic and neuroendocrine functions. The chain is Kappa-type opioid receptor (OPRK1) from Cavia porcellus (Guinea pig).